A 428-amino-acid chain; its full sequence is Divergent protein kinase domain 1A (428 aa).

At 1 to 27 (MARSLCPGAWLRKPYYLQARFSYVRMK) the chain is on the cytoplasmic side. The chain crosses the membrane as a helical span at residues 28 to 48 (YLFFSWLVVFVGSWIIYVQYS). Topologically, residues 49–428 (TYTELCRGKD…WKKISYTNDS (380 aa)) are lumenal.

Belongs to the DIPK family. In terms of processing, among the many cysteines in the lumenal domain, most are probably involved in disulfide bonds.

Its subcellular location is the endoplasmic reticulum membrane. The sequence is that of Divergent protein kinase domain 1A from Homo sapiens (Human).